The following is a 390-amino-acid chain: O-phospho-L-seryl-tRNA:Cys-tRNA synthase 2 (390 aa).

Residues 83–84, Asn-187, and 210–212 each bind pyridoxal 5'-phosphate; these read AR and SGH. Lys-213 is subject to N6-(pyridoxal phosphate)lysine.

Belongs to the SepCysS family. In terms of assembly, homodimer. Interacts with SepRS. It depends on pyridoxal 5'-phosphate as a cofactor.

The catalysed reaction is O-phospho-L-seryl-tRNA(Cys) + hydrogen sulfide + H(+) = L-cysteinyl-tRNA(Cys) + phosphate. Its function is as follows. Converts O-phospho-L-seryl-tRNA(Cys) (Sep-tRNA(Cys)) to L-cysteinyl-tRNA(Cys) (Cys-tRNA(Cys)). This is O-phospho-L-seryl-tRNA:Cys-tRNA synthase 2 from Archaeoglobus fulgidus (strain ATCC 49558 / DSM 4304 / JCM 9628 / NBRC 100126 / VC-16).